A 484-amino-acid chain; its full sequence is Cobyric acid synthase (484 aa).

Residues 251-438 (ALKVAVPVLS…LHGLFGSDAY (188 aa)) enclose the GATase cobBQ-type domain. Cysteine 333 (nucleophile) is an active-site residue. Histidine 430 is an active-site residue.

The protein belongs to the CobB/CobQ family. CobQ subfamily.

The protein operates within cofactor biosynthesis; adenosylcobalamin biosynthesis. Its function is as follows. Catalyzes amidations at positions B, D, E, and G on adenosylcobyrinic A,C-diamide. NH(2) groups are provided by glutamine, and one molecule of ATP is hydrogenolyzed for each amidation. The protein is Cobyric acid synthase of Rhizobium meliloti (strain 1021) (Ensifer meliloti).